A 95-amino-acid chain; its full sequence is Class I hydrophobin 13 (95 aa).

4 cysteine pairs are disulfide-bonded: Cys14-Cys74, Cys21-Cys68, Cys22-Cys55, and Cys75-Cys88. 2 N-linked (GlcNAc...) asparagine glycosylation sites follow: Asn23 and Asn77.

It belongs to the fungal hydrophobin family. As to quaternary structure, self-assembles to form functional amyloid fibrils called rodlets. Self-assembly into fibrillar rodlets occurs spontaneously at hydrophobic:hydrophilic interfaces and the rodlets further associate laterally to form amphipathic monolayers.

The protein localises to the secreted. It localises to the cell wall. Aerial growth, conidiation, and dispersal of filamentous fungi in the environment rely upon a capability of their secreting small amphipathic proteins called hydrophobins (HPBs) with low sequence identity. Class I can self-assemble into an outermost layer of rodlet bundles on aerial cell surfaces, conferring cellular hydrophobicity that supports fungal growth, development and dispersal; whereas Class II form highly ordered films at water-air interfaces through intermolecular interactions but contribute nothing to the rodlet structure. The protein is Class I hydrophobin 13 of Pleurotus ostreatus (strain PC15) (Oyster mushroom).